The sequence spans 178 residues: Actin-related protein 2/3 complex subunit 3-A (178 aa).

This sequence belongs to the ARPC3 family. Component of the Arp2/3 complex composed of actr2/arp2, actr3/arp3, arpc1 (arpc1a or arpc1b), arpc2, arpc3, arpc4 and arpc5.

It localises to the cytoplasm. Its subcellular location is the cytoskeleton. The protein resides in the cell projection. The protein localises to the nucleus. Its function is as follows. Component of the Arp2/3 complex, a multiprotein complex that mediates actin polymerization upon stimulation by nucleation-promoting factor (NPF). The Arp2/3 complex mediates the formation of branched actin networks in the cytoplasm, providing the force for cell motility. In addition to its role in the cytoplasmic cytoskeleton, the Arp2/3 complex also promotes actin polymerization in the nucleus, thereby regulating gene transcription and repair of damaged DNA. The Arp2/3 complex promotes homologous recombination (HR) repair in response to DNA damage by promoting nuclear actin polymerization, leading to drive motility of double-strand breaks (DSBs). This Xenopus laevis (African clawed frog) protein is Actin-related protein 2/3 complex subunit 3-A (arpc3-a).